The chain runs to 112 residues: T cell receptor alpha variable 41 (112 aa).

A signal peptide spans 1–21 (MVKIRQFLLAILWLQLSCVSA). An Ig-like domain is found at 24-112 (NEVEQSPQNL…DSAVYICAVR (89 aa)). N-linked (GlcNAc...) asparagine glycans are attached at residues Asn-32 and Asn-44. The cysteines at positions 45 and 109 are disulfide-linked.

Alpha-beta TR is a heterodimer composed of an alpha and beta chain; disulfide-linked. The alpha-beta TR is associated with the transmembrane signaling CD3 coreceptor proteins to form the TR-CD3 (TcR or TCR). The assembly of alpha-beta TR heterodimers with CD3 occurs in the endoplasmic reticulum where a single alpha-beta TR heterodimer associates with one CD3D-CD3E heterodimer, one CD3G-CD3E heterodimer and one CD247 homodimer forming a stable octameric structure. CD3D-CD3E and CD3G-CD3E heterodimers preferentially associate with TR alpha and TR beta chains, respectively. The association of the CD247 homodimer is the last step of TcR assembly in the endoplasmic reticulum and is required for transport to the cell surface.

Its subcellular location is the cell membrane. Functionally, v region of the variable domain of T cell receptor (TR) alpha chain that participates in the antigen recognition. Alpha-beta T cell receptors are antigen specific receptors which are essential to the immune response and are present on the cell surface of T lymphocytes. Recognize peptide-major histocompatibility (MH) (pMH) complexes that are displayed by antigen presenting cells (APC), a prerequisite for efficient T cell adaptive immunity against pathogens. Binding of alpha-beta TR to pMH complex initiates TR-CD3 clustering on the cell surface and intracellular activation of LCK that phosphorylates the ITAM motifs of CD3G, CD3D, CD3E and CD247 enabling the recruitment of ZAP70. In turn ZAP70 phosphorylates LAT, which recruits numerous signaling molecules to form the LAT signalosome. The LAT signalosome propagates signal branching to three major signaling pathways, the calcium, the mitogen-activated protein kinase (MAPK) kinase and the nuclear factor NF-kappa-B (NF-kB) pathways, leading to the mobilization of transcription factors that are critical for gene expression and essential for T cell growth and differentiation. The T cell repertoire is generated in the thymus, by V-(D)-J rearrangement. This repertoire is then shaped by intrathymic selection events to generate a peripheral T cell pool of self-MH restricted, non-autoaggressive T cells. Post-thymic interaction of alpha-beta TR with the pMH complexes shapes TR structural and functional avidity. In Homo sapiens (Human), this protein is T cell receptor alpha variable 41.